A 517-amino-acid polypeptide reads, in one-letter code: Crotonobetaine/carnitine--CoA ligase (517 aa).

The protein belongs to the ATP-dependent AMP-binding enzyme family.

It carries out the reaction 4-(trimethylamino)butanoate + ATP + CoA = 4-(trimethylamino)butanoyl-CoA + AMP + diphosphate. It catalyses the reaction crotonobetaine + ATP + CoA = crotonobetainyl-CoA + AMP + diphosphate. The catalysed reaction is (R)-carnitine + ATP + CoA = (R)-carnitinyl-CoA + AMP + diphosphate. It participates in amine and polyamine metabolism; carnitine metabolism. In terms of biological role, catalyzes the transfer of CoA to carnitine, generating the initial carnitinyl-CoA needed for the CaiB reaction cycle. Also has activity toward crotonobetaine and gamma-butyrobetaine. The chain is Crotonobetaine/carnitine--CoA ligase from Escherichia coli O9:H4 (strain HS).